The primary structure comprises 213 residues: 3-oxoadipate CoA-transferase subunit B (213 aa).

Glu50 is a catalytic residue.

The protein belongs to the 3-oxoacid CoA-transferase subunit B family. As to quaternary structure, heterodimer.

It catalyses the reaction 3-oxoadipate + succinyl-CoA = 3-oxoadipyl-CoA + succinate. It functions in the pathway aromatic compound metabolism; beta-ketoadipate pathway; acetyl-CoA and succinyl-CoA from 3-oxoadipate: step 1/2. The protein is 3-oxoadipate CoA-transferase subunit B (pcaJ) of Pseudomonas putida (strain ATCC 47054 / DSM 6125 / CFBP 8728 / NCIMB 11950 / KT2440).